Reading from the N-terminus, the 271-residue chain is Pyrroline-5-carboxylate reductase (271 aa).

The protein belongs to the pyrroline-5-carboxylate reductase family.

The protein localises to the cytoplasm. It carries out the reaction L-proline + NADP(+) = (S)-1-pyrroline-5-carboxylate + NADPH + 2 H(+). It catalyses the reaction L-proline + NAD(+) = (S)-1-pyrroline-5-carboxylate + NADH + 2 H(+). Its pathway is amino-acid biosynthesis; L-proline biosynthesis; L-proline from L-glutamate 5-semialdehyde: step 1/1. Functionally, catalyzes the reduction of 1-pyrroline-5-carboxylate (PCA) to L-proline. The chain is Pyrroline-5-carboxylate reductase from Staphylococcus saprophyticus subsp. saprophyticus (strain ATCC 15305 / DSM 20229 / NCIMB 8711 / NCTC 7292 / S-41).